We begin with the raw amino-acid sequence, 189 residues long: Glycerol-3-phosphate acyltransferase 1 (189 aa).

The next 5 helical transmembrane spans lie at 12-32 (MQFL…AYIV), 61-81 (GYFV…VSIA), 88-108 (FTFV…PMLF), 124-144 (IAFD…FYLI), and 164-184 (ILYS…VLIL).

Belongs to the PlsY family. As to quaternary structure, probably interacts with PlsX.

It is found in the cell membrane. It catalyses the reaction an acyl phosphate + sn-glycerol 3-phosphate = a 1-acyl-sn-glycero-3-phosphate + phosphate. Its pathway is lipid metabolism; phospholipid metabolism. Its function is as follows. Catalyzes the transfer of an acyl group from acyl-phosphate (acyl-PO(4)) to glycerol-3-phosphate (G3P) to form lysophosphatidic acid (LPA). This enzyme utilizes acyl-phosphate as fatty acyl donor, but not acyl-CoA or acyl-ACP. This Bacillus anthracis protein is Glycerol-3-phosphate acyltransferase 1.